Reading from the N-terminus, the 339-residue chain is MLDDRKLDVLKAIVTDYVSSKEPVGSKALVERHGLRVSPATVRNDMAVLEEEGYITHPHTSAGRIPTDKGYRLFVDRIATLKPLSAPERRAIQAFMTGAVDLDDIVRRTVRLLAQITHQVAIMQYPVATTGTIRHLELVSLSTDRILIVLIMSSGSVEQQIVELPGHDEQSLAALRTRLNETLVGLTVAEAADSLNRFLDDLGPAEGPRAASVIATVLEILAVDPSARVVVAGVPNLTAFGAQWETAVRPVLEALEEQVVLMRLLGEATAGEAGEVTVRIGAENTDVPFQSTSLVASTYGPEDALSSLGVVGPIRMDYPSTMAAVRAVARYVGRFLAEG.

It belongs to the HrcA family.

Its function is as follows. Negative regulator of class I heat shock genes (grpE-dnaK-dnaJ and groELS operons). Prevents heat-shock induction of these operons. This chain is Heat-inducible transcription repressor HrcA, found in Cutibacterium acnes (strain DSM 16379 / KPA171202) (Propionibacterium acnes).